A 195-amino-acid chain; its full sequence is dITP/XTP pyrophosphatase (195 aa).

9-14 lines the substrate pocket; that stretch reads TNNQGK. Residues Glu-39 and Asp-68 each coordinate Mg(2+). Asp-68 functions as the Proton acceptor in the catalytic mechanism. Residues Ser-69, 146–149, Lys-169, and 174–175 each bind substrate; these read FGYD and HR.

It belongs to the HAM1 NTPase family. As to quaternary structure, homodimer. The cofactor is Mg(2+).

It catalyses the reaction XTP + H2O = XMP + diphosphate + H(+). The enzyme catalyses dITP + H2O = dIMP + diphosphate + H(+). It carries out the reaction ITP + H2O = IMP + diphosphate + H(+). Pyrophosphatase that catalyzes the hydrolysis of nucleoside triphosphates to their monophosphate derivatives, with a high preference for the non-canonical purine nucleotides XTP (xanthosine triphosphate), dITP (deoxyinosine triphosphate) and ITP. Seems to function as a house-cleaning enzyme that removes non-canonical purine nucleotides from the nucleotide pool, thus preventing their incorporation into DNA/RNA and avoiding chromosomal lesions. This is dITP/XTP pyrophosphatase from Gloeobacter violaceus (strain ATCC 29082 / PCC 7421).